Here is a 359-residue protein sequence, read N- to C-terminus: MRSIRKRWTICTISLLLIFYKTKEIARTEEHQETQLIGDGELCLSRSLVNSSDKIIRKAGSTIFQHSVQGWRINSSLVLEIRKNILRFLDAERDVSVVKSSFKPGDVIHYVLDRRRTLNISHDLHSLLPEVSPMKNRRFKTCAVVGNSGILLDSGCGKEIDSHNFVIRCNLAPVVEFAADVGTKSDFITMNPSVVQRAFGGFRNESDRAKFVHRLSMLNDSVLWIPAFMVKGGEKHVEWVNALILKNKLKVRTAYPSLRLIHAVRGYWLTNKVPIKRPSTGLLMYTLATRFCDEIHLYGFWPFPKDLNGKAVKYHYYDDLKYRYFSNASPHRMPLEFKTLNVLHNRGALKLTTGKCMKQ.

At 1–7 (MRSIRKR) the chain is on the cytoplasmic side. A helical; Signal-anchor for type II membrane protein transmembrane segment spans residues 8-20 (WTICTISLLLIFY). The Lumenal portion of the chain corresponds to 21-359 (KTKEIARTEE…KLTTGKCMKQ (339 aa)). N-linked (GlcNAc...) asparagine glycans are attached at residues N50, N74, and N119. Disulfide bonds link C142–C292 and C156–C356. Residues N147 and N170 each coordinate CMP-N-acetyl-beta-neuraminate. 2 N-linked (GlcNAc...) asparagine glycosylation sites follow: N204 and N219. 4 residues coordinate CMP-N-acetyl-beta-neuraminate: S279, T280, G281, and W301. H331 functions as the Proton donor/acceptor in the catalytic mechanism.

The protein belongs to the glycosyltransferase 29 family. Post-translationally, autopolysialylated.

The protein localises to the golgi apparatus membrane. The protein resides in the secreted. It carries out the reaction [N-acetyl-alpha-D-neuraminosyl-(2-&gt;8)](n) + CMP-N-acetyl-beta-neuraminate = [N-acetyl-alpha-D-neuraminosyl-(2-&gt;8)](n+1) + CMP + H(+). Its pathway is protein modification; protein glycosylation. Its function is as follows. Catalyzes the transfer of a sialic acid from a CMP-linked sialic acid donor onto a terminal alpha-2,3-, alpha-2,6-, or alpha-2,8-linked sialic acid of an N-linked glycan protein acceptor through alpha-2,8-linkages. Therefore, participates in polysialic acid synthesis on various sialylated N-acetyllactosaminyl oligosaccharides, including NCAM1 N-glycans, FETUB N-glycans and AHSG. It is noteworthy that alpha-2,3-linked sialic acid is apparently a better acceptor than alpha-2,6-linked sialic acid. In Cricetulus griseus (Chinese hamster), this protein is CMP-N-acetylneuraminate-poly-alpha-2,8-sialyltransferase.